The chain runs to 675 residues: DNA ligase (675 aa).

Residues 32-36, 81-82, and glutamate 113 contribute to the NAD(+) site; these read DAEYD and SL. Residue lysine 115 is the N6-AMP-lysine intermediate of the active site. The NAD(+) site is built by arginine 136, glutamate 173, lysine 291, and lysine 315. 4 residues coordinate Zn(2+): cysteine 409, cysteine 412, cysteine 427, and cysteine 433. Residues 595 to 675 enclose the BRCT domain; the sequence is SEKTYFFNKK…ELNSLIRIKE (81 aa).

Belongs to the NAD-dependent DNA ligase family. LigA subfamily. Mg(2+) serves as cofactor. Mn(2+) is required as a cofactor.

The catalysed reaction is NAD(+) + (deoxyribonucleotide)n-3'-hydroxyl + 5'-phospho-(deoxyribonucleotide)m = (deoxyribonucleotide)n+m + AMP + beta-nicotinamide D-nucleotide.. Functionally, DNA ligase that catalyzes the formation of phosphodiester linkages between 5'-phosphoryl and 3'-hydroxyl groups in double-stranded DNA using NAD as a coenzyme and as the energy source for the reaction. It is essential for DNA replication and repair of damaged DNA. This Buchnera aphidicola subsp. Acyrthosiphon pisum (strain APS) (Acyrthosiphon pisum symbiotic bacterium) protein is DNA ligase.